A 63-amino-acid polypeptide reads, in one-letter code: Large ribosomal subunit protein uL30 (63 aa).

The protein belongs to the universal ribosomal protein uL30 family. As to quaternary structure, part of the 50S ribosomal subunit.

In Methylobacterium sp. (strain 4-46), this protein is Large ribosomal subunit protein uL30.